A 3268-amino-acid chain; its full sequence is E3 ubiquitin-protein ligase TOM1 (3268 aa).

A Phosphoserine modification is found at Ser1890. Disordered stretches follow at residues 1941–2023 (VFSD…EDDA) and 2038–2083 (GYDV…MGDS). The segment covering 1942–1955 (FSDEDDDMGEEDAD) has biased composition (acidic residues). The segment covering 1967–1976 (SSEMQSSTAD) has biased composition (polar residues). 3 stretches are compositionally biased toward acidic residues: residues 1978 to 1988 (TDVDYEVDDAD), 2042 to 2053 (DLSDYDVDESDW), and 2063 to 2074 (SDEDSESSEDEP). The residue at position 2096 (Thr2096) is a Phosphothreonine. Residues Ser2119, Ser2376, Ser2406, and Ser2418 each carry the phosphoserine modification. Positions 2416–2426 (DVSNNDEEVEN) are enriched in acidic residues. Residues 2416–2443 (DVSNNDEEVENGLDHGNSNDRNNADPEK) form a disordered region. Residues 2932-3268 (TNDEIKNSKL…NEGHEGFGLA (337 aa)) enclose the HECT domain. The active-site Glycyl thioester intermediate is Cys3235.

The protein belongs to the UPL family. TOM1/PTR1 subfamily. Interacts with the ADA3/NGG1 subunit of the SAGA complex. Interacts with KRR1.

It localises to the nucleus. The protein resides in the nucleolus. It catalyses the reaction S-ubiquitinyl-[E2 ubiquitin-conjugating enzyme]-L-cysteine + [acceptor protein]-L-lysine = [E2 ubiquitin-conjugating enzyme]-L-cysteine + N(6)-ubiquitinyl-[acceptor protein]-L-lysine.. Its pathway is protein modification; protein ubiquitination. In terms of biological role, probable ubiquitin ligase protein involved in many cellular processes, such as transcription regulation, maintenance of nuclear structure, cell cycle, mRNA export and rRNA maturation. E3 ubiquitin ligase proteins mediate ubiquitination and subsequent proteasomal degradation of target proteins. Involved in transcription regulation by interacting, and probably mediating, ubiquitination of some subunit of the SAGA complex. Required for SPT7 ubiquitination. Participates in mRNA export from the nucleus by regulating the transport of hnRNP proteins. Required for the shuttling of hnRNP protein NAB2, probably by mediating ubiquitination of a protein associated with NAB2. Also required for full induction of the general stress and heat-shock responses. Involved in 18S rRNA maturation by affecting several early steps in the rRNA processing pathway. The sequence is that of E3 ubiquitin-protein ligase TOM1 (TOM1) from Saccharomyces cerevisiae (strain ATCC 204508 / S288c) (Baker's yeast).